Here is a 50-residue protein sequence, read N- to C-terminus: Sperm protamine P1 (50 aa).

It belongs to the protamine P1 family. As to expression, testis.

It is found in the nucleus. The protein resides in the chromosome. Its function is as follows. Protamines substitute for histones in the chromatin of sperm during the haploid phase of spermatogenesis. They compact sperm DNA into a highly condensed, stable and inactive complex. This chain is Sperm protamine P1 (PRM1), found in Chilonatalus micropus (Cuban funnel-eared bat).